We begin with the raw amino-acid sequence, 190 residues long: Peptidyl-prolyl cis-trans isomerase A (190 aa).

A signal peptide spans 1-24; it reads MLKSTLAAVAAVFALSALSPAALA. In terms of domain architecture, PPIase cyclophilin-type spans 27–188; sequence GDPHVLLTTS…KPVVILSAKV (162 aa).

It belongs to the cyclophilin-type PPIase family.

It localises to the periplasm. It catalyses the reaction [protein]-peptidylproline (omega=180) = [protein]-peptidylproline (omega=0). In terms of biological role, PPIases accelerate the folding of proteins. It catalyzes the cis-trans isomerization of proline imidic peptide bonds in oligopeptides. This is Peptidyl-prolyl cis-trans isomerase A (ppiA) from Salmonella typhimurium (strain LT2 / SGSC1412 / ATCC 700720).